The chain runs to 295 residues: Small ribosomal subunit protein uS2 (295 aa).

The residue at position 2 (S2) is an N-acetylserine. The residue at position 43 (S43) is a Phosphoserine. At K52 the chain carries N6-acetyllysine. An interaction with PPP1R16B region spans residues T54–Q113. K89 carries the post-translational modification N6-acetyllysine; alternate. A Glycyl lysine isopeptide (Lys-Gly) (interchain with G-Cter in SUMO2); alternate cross-link involves residue K89. Position 97 is a phosphothreonine (T97). Laminin-binding stretches follow at residues I161 to R180 and R205 to G229. Positions E214 to F227 are enriched in basic and acidic residues. Positions E214–A240 are disordered. 4 [DE]-W-[ST] repeats span residues E230–T232, D247–S249, D266–S268, and D275–S277. Positions Q242 to S295 are laminin-binding. Residues P263–S295 form a disordered region. The segment covering P280–S295 has biased composition (polar residues).

This sequence belongs to the universal ribosomal protein uS2 family. As to quaternary structure, monomer (37LRP) and homodimer (67LR). Component of the small ribosomal subunit. Mature ribosomes consist of a small (40S) and a large (60S) subunit. The 40S subunit contains about 33 different proteins and 1 molecule of RNA (18S). The 60S subunit contains about 49 different proteins and 3 molecules of RNA (28S, 5.8S and 5S). Interacts with RPS21. Interacts with several laminins including at least LAMB1. Interacts with MDK. The mature dimeric form interacts with PPP1R16B (via its fourth ankyrin repeat). Interacts with PPP1CA only in the presence of PPP1R16B. In terms of processing, acylated. Acylation may be a prerequisite for conversion of the monomeric 37 kDa laminin receptor precursor (37LRP) to the mature dimeric 67 kDa laminin receptor (67LR), and may provide a mechanism for membrane association. Cleaved by stromelysin-3 (ST3) at the cell surface. Cleavage by stromelysin-3 may be a mechanism to alter cell-extracellular matrix interactions.

It localises to the cell membrane. The protein localises to the cytoplasm. Its subcellular location is the nucleus. Functionally, required for the assembly and/or stability of the 40S ribosomal subunit. Required for the processing of the 20S rRNA-precursor to mature 18S rRNA in a late step of the maturation of 40S ribosomal subunits. Also functions as a cell surface receptor for laminin. Plays a role in cell adhesion to the basement membrane and in the consequent activation of signaling transduction pathways. May play a role in cell fate determination and tissue morphogenesis. Also acts as a receptor for several other ligands, including the pathogenic prion protein, viruses, and bacteria. Acts as a PPP1R16B-dependent substrate of PPP1CA. The sequence is that of Small ribosomal subunit protein uS2 from Ovis aries (Sheep).